Here is a 279-residue protein sequence, read N- to C-terminus: Tryptophan synthase alpha chain (279 aa).

Residues Glu50 and Asp61 each act as proton acceptor in the active site.

This sequence belongs to the TrpA family. Tetramer of two alpha and two beta chains.

The catalysed reaction is (1S,2R)-1-C-(indol-3-yl)glycerol 3-phosphate + L-serine = D-glyceraldehyde 3-phosphate + L-tryptophan + H2O. It functions in the pathway amino-acid biosynthesis; L-tryptophan biosynthesis; L-tryptophan from chorismate: step 5/5. Its function is as follows. The alpha subunit is responsible for the aldol cleavage of indoleglycerol phosphate to indole and glyceraldehyde 3-phosphate. In Brucella suis biovar 1 (strain 1330), this protein is Tryptophan synthase alpha chain.